The following is a 227-amino-acid chain: Lipoprotein-releasing system ATP-binding protein LolD (227 aa).

One can recognise an ABC transporter domain in the interval 6-227 (LTSQKLYKSY…LHEGSLYARE (222 aa)). Position 42–49 (42–49 (GPSGSGKS)) interacts with ATP.

This sequence belongs to the ABC transporter superfamily. Lipoprotein translocase (TC 3.A.1.125) family. As to quaternary structure, the complex is composed of two ATP-binding proteins (LolD) and two transmembrane proteins (LolC and LolE).

Its subcellular location is the cell inner membrane. Its function is as follows. Part of the ABC transporter complex LolCDE involved in the translocation of mature outer membrane-directed lipoproteins, from the inner membrane to the periplasmic chaperone, LolA. Responsible for the formation of the LolA-lipoprotein complex in an ATP-dependent manner. This chain is Lipoprotein-releasing system ATP-binding protein LolD, found in Legionella pneumophila (strain Paris).